Here is a 347-residue protein sequence, read N- to C-terminus: Spermidine/putrescine import ATP-binding protein PotA (347 aa).

Positions 6–236 (IELRDISKHY…PKNSFVAKFI (231 aa)) constitute an ABC transporter domain. Residue 38–45 (GPSGCGKT) participates in ATP binding.

This sequence belongs to the ABC transporter superfamily. Spermidine/putrescine importer (TC 3.A.1.11.1) family. In terms of assembly, the complex is composed of two ATP-binding proteins (PotA), two transmembrane proteins (PotB and PotC) and a solute-binding protein (PotD).

Its subcellular location is the cell membrane. It catalyses the reaction ATP + H2O + polyamine-[polyamine-binding protein]Side 1 = ADP + phosphate + polyamineSide 2 + [polyamine-binding protein]Side 1.. Part of the ABC transporter complex PotABCD involved in spermidine/putrescine import. Responsible for energy coupling to the transport system. The polypeptide is Spermidine/putrescine import ATP-binding protein PotA (Clostridioides difficile (strain 630) (Peptoclostridium difficile)).